We begin with the raw amino-acid sequence, 211 residues long: Ubiquitin-conjugating enzyme E2 S (211 aa).

In terms of domain architecture, UBC core spans 11-157 (HIIRQVYKEV…ARLMTEIHAQ (147 aa)). The Glycyl thioester intermediate role is filled by C95. The tract at residues 157–211 (QGSSLRGKDPTDPCSSASATLVSGDGPMAKKHAGDRDKKLAAKKKTDKKRALRRL) is disordered. Positions 197-211 (AAKKKTDKKRALRRL) are enriched in basic residues.

The protein belongs to the ubiquitin-conjugating enzyme family.

It catalyses the reaction S-ubiquitinyl-[E1 ubiquitin-activating enzyme]-L-cysteine + [E2 ubiquitin-conjugating enzyme]-L-cysteine = [E1 ubiquitin-activating enzyme]-L-cysteine + S-ubiquitinyl-[E2 ubiquitin-conjugating enzyme]-L-cysteine.. It participates in protein modification; protein ubiquitination. Catalyzes the covalent attachment of ubiquitin to other proteins. Acts as an essential factor of the anaphase promoting complex/cyclosome (APC/C), a cell cycle-regulated ubiquitin ligase that controls progression through mitosis. Acts by specifically elongating 'Lys-11'-linked polyubiquitin chains initiated by the E2 enzyme ube2c/ubch10 on APC/C substrates, enhancing the degradation of APC/C substrates by the proteasome and promoting mitotic exit. The polypeptide is Ubiquitin-conjugating enzyme E2 S (ube2s) (Xenopus tropicalis (Western clawed frog)).